The primary structure comprises 382 residues: Histidine biosynthesis bifunctional protein HisB (382 aa).

Positions 1-190 (MQKIVFIDRD…EIYEFLRLPA (190 aa)) are histidinol-phosphatase. Catalysis depends on Asp-8, which acts as the Nucleophile. Mg(2+) contacts are provided by Asp-8, Asp-10, and Asp-129. Asp-10 (proton donor) is an active-site residue. The tract at residues 191 to 382 (RTALVERNTK…DNLPSTKGVL (192 aa)) is imidazoleglycerol-phosphate dehydratase.

The protein in the N-terminal section; belongs to the histidinol-phosphatase family. This sequence in the C-terminal section; belongs to the imidazoleglycerol-phosphate dehydratase family. Mg(2+) serves as cofactor.

The protein resides in the cytoplasm. The enzyme catalyses D-erythro-1-(imidazol-4-yl)glycerol 3-phosphate = 3-(imidazol-4-yl)-2-oxopropyl phosphate + H2O. The catalysed reaction is L-histidinol phosphate + H2O = L-histidinol + phosphate. It functions in the pathway amino-acid biosynthesis; L-histidine biosynthesis; L-histidine from 5-phospho-alpha-D-ribose 1-diphosphate: step 6/9. The protein operates within amino-acid biosynthesis; L-histidine biosynthesis; L-histidine from 5-phospho-alpha-D-ribose 1-diphosphate: step 8/9. The chain is Histidine biosynthesis bifunctional protein HisB from Spirosoma linguale (strain ATCC 33905 / DSM 74 / LMG 10896 / Claus 1).